A 428-amino-acid chain; its full sequence is MSYLVTIIAFIIVFGVLVTVHEYGHMFFAKRAGIMCPEFAIGMGPKIFSFRKNETLYTIRLLPVGGYVRMAGDGLEEPPVEPGMNVKIKLNEENEITHIILDDHHKFQQIEAIEVKKCDFKDDLFIEGITAYDNERHHFKIARKSFFVENGSLVQIAPRDRQFAHKKPWPKFLTLFAGPLFNFILALVLFIGLAYYQGTPTSTVEQVADKYPAQQAGLQKGDKIVQIGKYKISEFDDVDKALDKVKDNKTTVKFERDGKTKSVELTPKKTERKLTKVSSETKYVLGFQPASERTLFKPIVYGFESFLKGSTLIFTAVVGMLASIFTGGFSFDMLNGPVGIYHNVDSVVKAGIISLIGYTALLSVNLGIMNLIPIPALDGGRILFVIYEAIFRKPVNKKAETTIIAIGAIFMVVIMILVTWNDIRRYFL.

H21 contacts Zn(2+). E22 is a catalytic residue. Residue H25 participates in Zn(2+) binding. The next 4 membrane-spanning stretches (helical) occupy residues 172-194 (FLTL…IGLA), 309-331 (GSTL…GFSF), 352-374 (IISL…LIPI), and 401-420 (TTII…LVTW). Positions 186–269 (ALVLFIGLAY…TKSVELTPKK (84 aa)) constitute a PDZ domain.

Belongs to the peptidase M50B family. Zn(2+) serves as cofactor.

It localises to the cell membrane. The protein is Putative zinc metalloprotease SAS1196 of Staphylococcus aureus (strain MSSA476).